The following is a 179-amino-acid chain: Peptidyl-tRNA hydrolase (179 aa).

Tyr-15 lines the tRNA pocket. The active-site Proton acceptor is His-20. The tRNA site is built by Tyr-66, Asn-68, and Asn-114.

Belongs to the PTH family. In terms of assembly, monomer.

It is found in the cytoplasm. The enzyme catalyses an N-acyl-L-alpha-aminoacyl-tRNA + H2O = an N-acyl-L-amino acid + a tRNA + H(+). Functionally, hydrolyzes ribosome-free peptidyl-tRNAs (with 1 or more amino acids incorporated), which drop off the ribosome during protein synthesis, or as a result of ribosome stalling. Its function is as follows. Catalyzes the release of premature peptidyl moieties from peptidyl-tRNA molecules trapped in stalled 50S ribosomal subunits, and thus maintains levels of free tRNAs and 50S ribosomes. This chain is Peptidyl-tRNA hydrolase, found in Chlamydia muridarum (strain MoPn / Nigg).